A 128-amino-acid chain; its full sequence is UPF0102 protein Acry_2261 (128 aa).

This sequence belongs to the UPF0102 family.

This chain is UPF0102 protein Acry_2261, found in Acidiphilium cryptum (strain JF-5).